The primary structure comprises 383 residues: GDSL esterase/lipase At1g28610 (383 aa).

The first 22 residues, 1–22 (MASLDSLVSFFLSTLFVTIVSS), serve as a signal peptide directing secretion. S38 functions as the Nucleophile in the catalytic mechanism. N134, N184, and N315 each carry an N-linked (GlcNAc...) asparagine glycan. Residues D340 and H343 contribute to the active site.

This sequence belongs to the 'GDSL' lipolytic enzyme family.

Its subcellular location is the secreted. The chain is GDSL esterase/lipase At1g28610 from Arabidopsis thaliana (Mouse-ear cress).